A 595-amino-acid chain; its full sequence is 3-hydroxy-3-methylglutaryl-coenzyme A reductase 2 (595 aa).

A glycan (N-linked (GlcNAc...) asparagine) is linked at N35. 2 consecutive transmembrane segments (helical) span residues 48-68 (LPLY…MYFL) and 92-112 (AIVS…IGFV). Residues 113-183 (QTFVSRGNND…SPLITPASSE (71 aa)) are linker. Residue N121 is glycosylated (N-linked (GlcNAc...) asparagine). A catalytic region spans residues 184-595 (EDEEIINSVV…KYNRSTKASS (412 aa)). E278 (charge relay system) is an active-site residue. N-linked (GlcNAc...) asparagine glycosylation is present at N342. Catalysis depends on K410, which acts as the Charge relay system. A glycan (N-linked (GlcNAc...) asparagine) is linked at N455. Catalysis depends on D486, which acts as the Charge relay system. The active-site Proton donor is H584. The N-linked (GlcNAc...) asparagine glycan is linked to N588.

This sequence belongs to the HMG-CoA reductase family. In terms of tissue distribution, expressed in young flowers and in mature sepals and ovaries.

The protein resides in the endoplasmic reticulum membrane. The enzyme catalyses (R)-mevalonate + 2 NADP(+) + CoA = (3S)-3-hydroxy-3-methylglutaryl-CoA + 2 NADPH + 2 H(+). It participates in metabolic intermediate biosynthesis; (R)-mevalonate biosynthesis; (R)-mevalonate from acetyl-CoA: step 3/3. Functionally, catalyzes the synthesis of mevalonate. The specific precursor of all isoprenoid compounds present in plants. The chain is 3-hydroxy-3-methylglutaryl-coenzyme A reductase 2 (HMG2) from Solanum tuberosum (Potato).